The chain runs to 1969 residues: Echinoderm microtubule-associated protein-like 5 (1969 aa).

10 WD repeats span residues 59 to 100 (GHSD…TISV), 104 to 145 (VHTH…MLSM), 148 to 187 (GHTD…LTPK), 195 to 233 (GDLQ…RTIQ), 235 to 273 (AHAA…TVID), 280 to 321 (GYKG…LIMQ), 323 to 362 (HCEG…LIAR), 406 to 445 (DRKE…KKVG), 449 to 488 (GSLS…EVTS), and 561 to 601 (GHSA…KLKD). The tract at residues 609 to 633 (ESLADSHSDESDSDLSDVPELDSEI) is disordered. The span at 619 to 633 (SDSDLSDVPELDSEI) shows a compositional bias: acidic residues. WD repeat units lie at residues 725 to 766 (GHDD…PLSI), 770 to 811 (HHQY…KLSI), 814 to 853 (GSKD…LIGR), 861 to 900 (GKND…KTVK), 901 to 940 (AHDG…KTYA), 996 to 1035 (HMEG…CMLA), 1038 to 1077 (KLKK…DLVS), 1080 to 1120 (HRKD…RVGI), and 1236 to 1276 (AHST…YREK). 2 disordered regions span residues 1274 to 1297 (REKR…YDSD) and 1326 to 1355 (QQKE…NVGK). Acidic residues predominate over residues 1281–1294 (SEESDIDSEEDGGY). Residues 1326–1337 (QQKEPSIDERPP) show a composition bias toward basic and acidic residues. WD repeat units follow at residues 1412 to 1463 (EHND…TLSI), 1467 to 1508 (YHSK…KIAS), 1511 to 1550 (GHNQ…LLSK), 1560 to 1598 (ARMQ…RIVA), 1600 to 1646 (AHNG…RAFR), 1691 to 1731 (GHVD…MLNK), 1733 to 1774 (NLGH…GKKR), 1775 to 1814 (DRRC…TLNR), 1887 to 1926 (AEKA…KFAK), and 1932 to 1969 (GHSP…HTPH).

Belongs to the WD repeat EMAP family.

Its subcellular location is the cytoplasm. It is found in the cytoskeleton. Its function is as follows. May modify the assembly dynamics of microtubules, such that microtubules are slightly longer, but more dynamic. The sequence is that of Echinoderm microtubule-associated protein-like 5 (EML5) from Homo sapiens (Human).